The following is a 286-amino-acid chain: MRYIRLCIISLLATLPLAVHASPQPLEQIKLSESQLSGRVGMIEMDLASGRTLTAWRADERFPMMSTFKVVLCGAVLARVDAGDEQLERKIHYRQQDLVDYSPVSEKHLADGMTVGELCAAAITMSDNSAANLLLATVGGPAGLTAFLRQIGDNVTRLDRWETELNEALPGDARGTTTPASMAATLRKLLTSQRLSARSQRQLLQWMVDDRVAGPLIRSVLPAGWFIADKTGAGERGARGIVALLGPNNKAERIVVIYLRDTPASMAERNQQIAGIGAALIEHWQR.

A signal peptide spans 1–21; it reads MRYIRLCIISLLATLPLAVHA. Ser-66 functions as the Acyl-ester intermediate in the catalytic mechanism. A disulfide bond links Cys-73 and Cys-119. The active-site Proton acceptor is the Glu-164. Residue 230-232 coordinates substrate; sequence KTG.

It belongs to the class-A beta-lactamase family.

It catalyses the reaction a beta-lactam + H2O = a substituted beta-amino acid. Its function is as follows. Hydrolyzes ampicillin. Can also hydrolyze cephaloridine, aztreonam and ceftazidime with a low catalytic rate. In Escherichia coli, this protein is Beta-lactamase SHV-24 (bla).